A 312-amino-acid chain; its full sequence is Very-long-chain 3-oxoacyl-CoA reductase (312 aa).

Residues 4–24 traverse the membrane as a helical segment; sequence ALPAAGFLYWVGASTVAYLAL. NADP(+) is bound at residue 50 to 79; it reads GEWAVVTGGTDGIGKSYAEELAKRGMKIVL. 2 helical membrane-spanning segments follow: residues 182-202 and 271-291; these read GAIL…LTIY and GYPI…WLYF. Residue Ser189 participates in substrate binding. The active-site Proton acceptor is Tyr202. The short motif at 308–312 is the Di-lysine motif element; it reads KMKMN.

It belongs to the short-chain dehydrogenases/reductases (SDR) family. 17-beta-HSD 3 subfamily.

The protein resides in the endoplasmic reticulum membrane. The catalysed reaction is a very-long-chain (3R)-3-hydroxyacyl-CoA + NADP(+) = a very-long-chain 3-oxoacyl-CoA + NADPH + H(+). It carries out the reaction 17beta-estradiol + NAD(+) = estrone + NADH + H(+). The enzyme catalyses 17beta-estradiol + NADP(+) = estrone + NADPH + H(+). It catalyses the reaction 3-oxooctadecanoyl-CoA + NADPH + H(+) = (3R)-hydroxyoctadecanoyl-CoA + NADP(+). The catalysed reaction is (7Z,10Z,13Z,16Z)-3-oxodocosatetraenoyl-CoA + NADPH + H(+) = (3R)-hydroxy-(7Z,10Z,13Z,16Z)-docosatetraenoyl-CoA + NADP(+). It carries out the reaction 3-oxo-(7Z,10Z,13Z,16Z,19Z)-docosapentaenoyl-CoA + NADPH + H(+) = (3R)-hydroxy-(7Z,10Z,13Z,16Z,19Z)-docosapentaenoyl-CoA + NADP(+). The enzyme catalyses (8Z,11Z,14Z)-3-oxoeicosatrienoyl-CoA + NADPH + H(+) = (3R)-hydroxy-(8Z,11Z,14Z)-eicosatrienoyl-CoA + NADP(+). Its pathway is lipid metabolism; fatty acid biosynthesis. It participates in steroid biosynthesis; estrogen biosynthesis. Catalyzes the second of the four reactions of the long-chain fatty acids elongation cycle. This endoplasmic reticulum-bound enzymatic process, allows the addition of two carbons to the chain of long- and very long-chain fatty acids/VLCFAs per cycle. This enzyme has a 3-ketoacyl-CoA reductase activity, reducing 3-ketoacyl-CoA to 3-hydroxyacyl-CoA, within each cycle of fatty acid elongation. Thereby, it may participate in the production of VLCFAs of different chain lengths that are involved in multiple biological processes as precursors of membrane lipids and lipid mediators. May also catalyze the transformation of estrone (E1) into estradiol (E2) and play a role in estrogen formation. The chain is Very-long-chain 3-oxoacyl-CoA reductase (HSD17B12) from Bos taurus (Bovine).